Here is a 117-residue protein sequence, read N- to C-terminus: Ribosome-binding factor A (117 aa).

This sequence belongs to the RbfA family. Monomer. Binds 30S ribosomal subunits, but not 50S ribosomal subunits or 70S ribosomes.

Its subcellular location is the cytoplasm. Its function is as follows. One of several proteins that assist in the late maturation steps of the functional core of the 30S ribosomal subunit. Associates with free 30S ribosomal subunits (but not with 30S subunits that are part of 70S ribosomes or polysomes). Required for efficient processing of 16S rRNA. May interact with the 5'-terminal helix region of 16S rRNA. The sequence is that of Ribosome-binding factor A from Bacillus subtilis (strain 168).